A 395-amino-acid polypeptide reads, in one-letter code: Flagellin B (395 aa).

The protein belongs to the bacterial flagellin family.

The protein resides in the secreted. It localises to the bacterial flagellum. Flagellin is the subunit protein which polymerizes to form the filaments of bacterial flagella. In Rhizobium meliloti (Ensifer meliloti), this protein is Flagellin B (flaB).